Here is an 89-residue protein sequence, read N- to C-terminus: HssA/B-like protein DDB_G0295685 (89 aa).

Belongs to the hssA/B family.

This is HssA/B-like protein DDB_G0295685 from Dictyostelium discoideum (Social amoeba).